Reading from the N-terminus, the 256-residue chain is Glutamate racemase (256 aa).

Residues 11–12 (DS) and 43–44 (YG) contribute to the substrate site. Cysteine 74 serves as the catalytic Proton donor/acceptor. Substrate is bound at residue 75-76 (NT). The Proton donor/acceptor role is filled by cysteine 182. 183 to 184 (TH) provides a ligand contact to substrate.

The protein belongs to the aspartate/glutamate racemases family.

It catalyses the reaction L-glutamate = D-glutamate. The protein operates within cell wall biogenesis; peptidoglycan biosynthesis. Its function is as follows. Provides the (R)-glutamate required for cell wall biosynthesis. The protein is Glutamate racemase of Leptospira interrogans serogroup Icterohaemorrhagiae serovar Lai (strain 56601).